The primary structure comprises 333 residues: MIDITLPLTDIHRHLDGNIRAQTILDLGRQFNIALPAQTLETLIPHVQVTSTEPDLVSFLTKLDWGVKVLASLDACRRVAFENIEDAARNGLHYVELRFSPGYMAMAHQLPIAGVVEAVIDGVRDGCNTFGVEARLIGIMSRTFGEAACLQELDALLAHREKITALDLAGDELGFPGSLFLSHFNRARDAGWHITVHAGEAAGPESIWQAIRELGAERIGHGVKAVEDRALMDFLAQQRIGIESCLTSNIQTSTVASLADHPLKTFLEHGVLASLNTDDPAVQGVDIIHEYHVAAPAAGLSREQIRQAQINGLEIAFLSDGEKRALREKVAAA.

Residues His12 and His14 each contribute to the Zn(2+) site. Substrate-binding residues include His14, Asp16, and Gly170. Residue His197 coordinates Zn(2+). The Proton donor role is filled by Glu200. Residue Asp278 participates in Zn(2+) binding. Position 279 (Asp279) interacts with substrate.

It belongs to the metallo-dependent hydrolases superfamily. Adenosine and AMP deaminases family. Adenosine deaminase subfamily. Zn(2+) is required as a cofactor.

It catalyses the reaction adenosine + H2O + H(+) = inosine + NH4(+). The enzyme catalyses 2'-deoxyadenosine + H2O + H(+) = 2'-deoxyinosine + NH4(+). In terms of biological role, catalyzes the hydrolytic deamination of adenosine and 2-deoxyadenosine. The protein is Adenosine deaminase of Salmonella agona (strain SL483).